Here is an 85-residue protein sequence, read N- to C-terminus: Kunitz-type serine protease inhibitor homolog beta-bungarotoxin B2 chain (85 aa).

An N-terminal signal peptide occupies residues 1–24 (MSSGGLLLLLGLLTLCAELTPVSS). The 51-residue stretch at 31-81 (CDKPPDTKICQTVVRAFYYKPSAKRCVQFRYGGCNGNGNHFKSDHLCRCEC) folds into the BPTI/Kunitz inhibitor domain. 3 disulfides stabilise this stretch: C31–C81, C40–C64, and C56–C77.

The protein belongs to the venom Kunitz-type family. In terms of assembly, heterodimer; disulfide-linked. The A chains have phospholipase A2 activity and the B chains show homology with the basic protease inhibitors. Expressed by the venom gland.

It is found in the secreted. Functionally, beta-2-bungarotoxin is a presynaptic neurotoxin of the venom. The B chain is homologous to venom basic protease inhibitors but has no protease inhibitor activity and blocks voltage-gated potassium channels (Kv). The sequence is that of Kunitz-type serine protease inhibitor homolog beta-bungarotoxin B2 chain from Bungarus multicinctus (Many-banded krait).